Consider the following 1066-residue polypeptide: Cytoplasmic dynein 2 intermediate chain 1 (1066 aa).

Disordered stretches follow at residues 22–366 (LWAI…ENAR) and 381–408 (YEDD…LEEL). Ser30 is modified (phosphoserine). Composition is skewed to basic and acidic residues over residues 30 to 135 (SKEE…EELR), 147 to 171 (ETRD…RSEE), 180 to 256 (DEDR…EERH), 264 to 308 (GFHF…KRDG), and 316 to 336 (NLVR…HEEG). Ser247 is modified (phosphoserine). Composition is skewed to acidic residues over residues 351–362 (ETVEIEKEETDL) and 381–397 (YEDD…ESSN). The segment covering 399 to 408 (PESREKLEEL) has biased composition (basic and acidic residues). Residues 473-552 (ASHRQKSRTQ…DIQTEEIETR (80 aa)) are binding to the DYNLT2B-DYNLT1/DYNLT3 dimer. WD repeat units lie at residues 694–734 (ICES…RLHY), 775–821 (VHKK…KADI), 907–947 (IRPV…PLLQ), and 952–992 (TDSH…LGPV).

This sequence belongs to the dynein light intermediate chain family. Intermediate chain of the cytoplasmic dynein complex 2, a multisubunit complex, composed at least of eleven different proteins. The cytoplasmic dynein 2 complex consists of two catalytic heavy chains (HCs) and a number of non-catalytic subunits presented by intermediate chains (ICs), light intermediate chains (LICs) and light chains (LCs). Among them, a heavy chain (DYNC2H1), two intermediate chains (DYNC2I2 and DYNC2I1), a light intermediate chain (DYNC2LI1), and a light chain (DYNLT2B) are unique to the cytoplasmic dynein complex 2, but a subset of the light chains are also shared by dynein-1 and dynein-2 complexes. Interacts with DYNC2I2; their C-terminal domains each bind a copy of the heavy chain, and their extended N-terminal regions are held together by an array of light chain dimers. Interacts with DYNLT2B. Interacts (via the N-terminal half) with DYNLT2B-DYNLT1 dimer or with DYNLT2B-DYNLT3 dimer; this interaction is crucial for retrograde trafficking of ciliary proteins. As to expression, expressed in chondrocytes (at protein level).

Its subcellular location is the cell projection. It is found in the cilium. The protein localises to the cytoplasm. The protein resides in the cytoskeleton. It localises to the microtubule organizing center. Its subcellular location is the centrosome. Functionally, acts as one of several non-catalytic accessory components of the cytoplasmic dynein 2 complex (dynein-2 complex), a motor protein complex that drives the movement of cargos along microtubules within cilia and flagella in concert with the intraflagellar transport (IFT) system. DYNC2I1 plays a major role in retrograde ciliary protein trafficking in cilia and flagella. Also requires to maintain a functional transition zone. The protein is Cytoplasmic dynein 2 intermediate chain 1 of Homo sapiens (Human).